A 428-amino-acid chain; its full sequence is Immunoglobulin superfamily member 11 (428 aa).

An N-terminal signal peptide occupies residues 1–22; sequence MTRRRSAPASWLLVSLLGVATS. Residues 23–136 enclose the Ig-like V-type domain; sequence LEVSESPGSV…DRGGRNIGVT (114 aa). The Extracellular segment spans residues 23–240; sequence LEVSESPGSV…QVISPQPRSV (218 aa). Cystine bridges form between cysteine 44–cysteine 120 and cysteine 165–cysteine 215. Asparagine 102 carries N-linked (GlcNAc...) asparagine glycosylation. One can recognise an Ig-like C2-type domain in the interval 144–234; sequence PSAPQCQIQG…TCLLDLQVIS (91 aa). Residues 241–261 traverse the membrane as a helical segment; sequence GVIAGAVGTGAVLIVICLALI. The Cytoplasmic segment spans residues 262–428; it reads SGAFFYWRSK…PAQSRAGSLV (167 aa). The residue at position 375 (arginine 375) is an Omega-N-methylarginine. Residues 376 to 389 show a composition bias toward polar residues; sequence GSSPQVLPRNNGSV. The tract at residues 376-396 is disordered; sequence GSSPQVLPRNNGSVSRKPWPQ.

N-glycosylated. In terms of tissue distribution, highly expressed in testis and detected in kidney and adrenal gland. In brain, expressed in commissure fibers of the corpus callosum and pyramidal cell layers of the dentate gyrus and hippocampus where it is probably expressed by both neurons and glial cells.

It is found in the cell membrane. Functions as a cell adhesion molecule through homophilic interaction. Stimulates cell growth. The protein is Immunoglobulin superfamily member 11 (Igsf11) of Mus musculus (Mouse).